We begin with the raw amino-acid sequence, 932 residues long: Serotype-specific antigen 1 (932 aa).

The N-terminal stretch at 1 to 24 (MYKIKHSFNKTLIAISISSFLSIA) is a signal peptide. A Peptidase S8 domain is found at 25–407 (YATESIENPQ…WGLINLKKAV (383 aa)). Active-site charge relay system residues include D58, H116, and S351. The Autotransporter domain occupies 669–932 (HTPLQTTVWA…PIWLESKCWL (264 aa)).

The protein belongs to the peptidase S8 family.

Its subcellular location is the cell outer membrane. In Mannheimia haemolytica (Pasteurella haemolytica), this protein is Serotype-specific antigen 1 (ssa1).